Consider the following 155-residue polypeptide: Anaerobic ribonucleoside-triphosphate reductase-activating protein (155 aa).

[4Fe-4S] cluster is bound by residues Cys26, Cys30, and Cys33. Residues 32 to 34 (GCY) and Gly74 each bind S-adenosyl-L-methionine.

It belongs to the organic radical-activating enzymes family. Forms a tetramer composed of two NrdD and two NrdG subunits. [4Fe-4S] cluster serves as cofactor.

It localises to the cytoplasm. The enzyme catalyses glycyl-[protein] + reduced [flavodoxin] + S-adenosyl-L-methionine = glycin-2-yl radical-[protein] + semiquinone [flavodoxin] + 5'-deoxyadenosine + L-methionine + H(+). Activation of anaerobic ribonucleoside-triphosphate reductase under anaerobic conditions by generation of an organic free radical, using S-adenosylmethionine and reduced flavodoxin as cosubstrates to produce 5'-deoxy-adenosine. The polypeptide is Anaerobic ribonucleoside-triphosphate reductase-activating protein (nrdG) (Haemophilus influenzae (strain ATCC 51907 / DSM 11121 / KW20 / Rd)).